The primary structure comprises 415 residues: Squalene synthase 1 (415 aa).

2 helical membrane-spanning segments follow: residues 281–301 (AIFR…ALCF) and 391–411 (LIAI…SNLL).

Belongs to the phytoene/squalene synthase family. The cofactor is Mg(2+). It depends on Mn(2+) as a cofactor. In terms of tissue distribution, mostly expressed in the shoot apex (buds) and roots, and, to a lower extent, in stems, leaves, flowers and seeds.

The protein resides in the endoplasmic reticulum membrane. It carries out the reaction 2 (2E,6E)-farnesyl diphosphate + NADH + H(+) = squalene + 2 diphosphate + NAD(+). It catalyses the reaction 2 (2E,6E)-farnesyl diphosphate + NADPH + H(+) = squalene + 2 diphosphate + NADP(+). It functions in the pathway terpene metabolism; lanosterol biosynthesis; lanosterol from farnesyl diphosphate: step 1/3. In terms of biological role, component of the triterpene saponins (e.g. ginsenosides or panaxosides) and phytosterols biosynthetic pathways. Catalyzes the biosynthesis of squalene. This is Squalene synthase 1 from Panax ginseng (Korean ginseng).